Here is a 260-residue protein sequence, read N- to C-terminus: Shikimate dehydrogenase (260 aa).

The active-site Proton acceptor is the Lys-71. 124 to 128 (GAGGA) serves as a coordination point for NADP(+).

This sequence belongs to the shikimate dehydrogenase family.

It carries out the reaction shikimate + NADP(+) = 3-dehydroshikimate + NADPH + H(+). It participates in metabolic intermediate biosynthesis; chorismate biosynthesis; chorismate from D-erythrose 4-phosphate and phosphoenolpyruvate: step 4/7. The protein is Shikimate dehydrogenase (aroE) of Sulfurisphaera tokodaii (strain DSM 16993 / JCM 10545 / NBRC 100140 / 7) (Sulfolobus tokodaii).